Reading from the N-terminus, the 262-residue chain is Bacteriorhodopsin (262 aa).

The propeptide occupies 1–13 (MLELLPTAVEGVS). Position 14 is a pyrrolidone carboxylic acid (Gln-14). Over 14-22 (QAQITGRPE) the chain is Extracellular. A helical membrane pass occupies residues 23-42 (WIWLALGTALMGLGTLYFLV). Residues 43 to 56 (KGMGVSDPDAKKFY) lie on the Cytoplasmic side of the membrane. A helical transmembrane segment spans residues 57–75 (AITTLVPAIAFTMYLSMLL). Residues 76–92 (GYGLTMVPFGGEQNPIY) are Extracellular-facing. A helical membrane pass occupies residues 93-109 (WARYADWLFTTPLLLLD). Over 110–120 (LALLVDADQGT) the chain is Cytoplasmic. A helical transmembrane segment spans residues 121–140 (ILALVGADGIMIGTGLVGAL). Over 141–147 (TKVYSYR) the chain is Extracellular. Residues 148–167 (FVWWAISTAAMLYILYVLFF) traverse the membrane as a helical segment. The Cytoplasmic segment spans residues 168–185 (GFTSKAESMRPEVASTFK). The helical transmembrane segment at 186-204 (VLRNVTVVLWSAYPVVWLI) threads the bilayer. Residues 205-216 (GSEGAGIVPLNI) lie on the Extracellular side of the membrane. Residues 217 to 236 (ETLLFMVLDVSAKVGFGLIL) traverse the membrane as a helical segment. Lys-229 carries the post-translational modification N6-(retinylidene)lysine. The Cytoplasmic portion of the chain corresponds to 237–262 (LRSRAIFGEAEAPEPSAGDGAAATSD).

As to quaternary structure, homotrimer. In terms of processing, the covalent binding of retinal to the apoprotein, bacterioopsin, generates bacteriorhodopsin.

Its subcellular location is the cell membrane. Functionally, light-driven proton pump. The chain is Bacteriorhodopsin (bop) from Halobacterium salinarum (strain ATCC 700922 / JCM 11081 / NRC-1) (Halobacterium halobium).